An 879-amino-acid polypeptide reads, in one-letter code: Bifunctional uridylyltransferase/uridylyl-removing enzyme (879 aa).

The segment at 1-340 (MANVQEDKDF…GTQDLQHAEH (340 aa)) is uridylyltransferase. The segment at 341–700 (ISDDFAVANK…IGDENNYGTT (360 aa)) is uridylyl-removing. The HD domain maps to 458–580 (VDEHTFRLVR…VSTPERLDYL (123 aa)). 2 consecutive ACT domains span residues 701–782 (ELFI…STKR) and 809–879 (TFEL…DLEF).

Belongs to the GlnD family. Mg(2+) serves as cofactor.

The enzyme catalyses [protein-PII]-L-tyrosine + UTP = [protein-PII]-uridylyl-L-tyrosine + diphosphate. It catalyses the reaction [protein-PII]-uridylyl-L-tyrosine + H2O = [protein-PII]-L-tyrosine + UMP + H(+). Uridylyltransferase (UTase) activity is inhibited by glutamine, while glutamine activates uridylyl-removing (UR) activity. In terms of biological role, modifies, by uridylylation and deuridylylation, the PII regulatory proteins (GlnB and homologs), in response to the nitrogen status of the cell that GlnD senses through the glutamine level. Under low glutamine levels, catalyzes the conversion of the PII proteins and UTP to PII-UMP and PPi, while under higher glutamine levels, GlnD hydrolyzes PII-UMP to PII and UMP (deuridylylation). Thus, controls uridylylation state and activity of the PII proteins, and plays an important role in the regulation of nitrogen assimilation and metabolism. The chain is Bifunctional uridylyltransferase/uridylyl-removing enzyme from Idiomarina loihiensis (strain ATCC BAA-735 / DSM 15497 / L2-TR).